A 94-amino-acid polypeptide reads, in one-letter code: HssA/B-like protein 49 (94 aa).

Positions 1 to 20 are disordered; sequence MTLFSSISSISNPMTSSKSS.

The protein belongs to the hssA/B family.

In Dictyostelium discoideum (Social amoeba), this protein is HssA/B-like protein 49 (hssl49).